The following is a 405-amino-acid chain: Eukaryotic translation initiation factor 5 (405 aa).

27-34 is a binding site for GTP; it reads GRGNGIKT. The segment at 143-202 is disordered; it reads NPPDSVSGSKKKKKAATASANVRGGGLSISDIAQGKSQNAPSDGTGSSTPQHHDEDEDEL. A phosphoserine mark is found at Ser-170 and Ser-172. Positions 177–192 are enriched in polar residues; sequence GKSQNAPSDGTGSSTP. At Thr-191 the chain carries Phosphothreonine. Phosphoserine is present on Ser-228. The W2 domain maps to 241–402; the sequence is VNSELTQLDE…ETAESDDDEE (162 aa). At Thr-317 the chain carries Phosphothreonine. Ser-397 is modified (phosphoserine).

This sequence belongs to the eIF-2-beta/eIF-5 family. As to quaternary structure, monomer. The factors eIF-1, eIF-2, eIF-3, TIF5/eIF-5 and methionyl-tRNAi form a multifactor complex (MFC) that may bind to the 40S ribosome. TIF32, NIP1 and TIF5/eIF-5 comprise a minimal 40S-ribosome-binding unit. Interacts with NIP1. Interacts with SUI3.

Its function is as follows. Catalyzes the hydrolysis of GTP bound to the 40S ribosomal initiation complex (40S.mRNA.Met-tRNA[F].eIF-2.GTP) with the subsequent joining of a 60S ribosomal subunit resulting in the release of eIF-2 and the guanine nucleotide. The subsequent joining of a 60S ribosomal subunit results in the formation of a functional 80S initiation complex (80S.mRNA.Met-tRNA[F]). eIF-5 is essential for cell viability. The polypeptide is Eukaryotic translation initiation factor 5 (TIF5) (Saccharomyces cerevisiae (strain ATCC 204508 / S288c) (Baker's yeast)).